The primary structure comprises 649 residues: Beta-galactosidase-1-like protein 3 (649 aa).

Catalysis depends on glutamate 203, which acts as the Proton donor. Residue glutamate 277 is the Nucleophile of the active site.

The protein belongs to the glycosyl hydrolase 35 family.

The protein is Beta-galactosidase-1-like protein 3 (Glb1l3) of Mus musculus (Mouse).